The sequence spans 150 residues: MQIILLDKVANLGSLGDQVNVKPGYARNYLVPQGKAVPATKKNIEFFEARRAELEANLANVLATAEARAEKINALGSVTIASKAGDEGKLFGSVGTRDIADAVTAAGVEVSKSEVRLPNGVLRTIGEHEVNFQVHSDVFAKLNVNIVAEA.

It belongs to the bacterial ribosomal protein bL9 family.

Binds to the 23S rRNA. The chain is Large ribosomal subunit protein bL9 from Photorhabdus laumondii subsp. laumondii (strain DSM 15139 / CIP 105565 / TT01) (Photorhabdus luminescens subsp. laumondii).